Consider the following 141-residue polypeptide: Large ribosomal subunit protein uL11 (141 aa).

Belongs to the universal ribosomal protein uL11 family. Part of the ribosomal stalk of the 50S ribosomal subunit. Interacts with L10 and the large rRNA to form the base of the stalk. L10 forms an elongated spine to which L12 dimers bind in a sequential fashion forming a multimeric L10(L12)X complex. Post-translationally, one or more lysine residues are methylated.

Its function is as follows. Forms part of the ribosomal stalk which helps the ribosome interact with GTP-bound translation factors. This is Large ribosomal subunit protein uL11 from Crocosphaera subtropica (strain ATCC 51142 / BH68) (Cyanothece sp. (strain ATCC 51142)).